Reading from the N-terminus, the 1083-residue chain is Error-prone DNA polymerase (1083 aa).

This sequence belongs to the DNA polymerase type-C family. DnaE2 subfamily.

It is found in the cytoplasm. It catalyses the reaction DNA(n) + a 2'-deoxyribonucleoside 5'-triphosphate = DNA(n+1) + diphosphate. In terms of biological role, DNA polymerase involved in damage-induced mutagenesis and translesion synthesis (TLS). It is not the major replicative DNA polymerase. This is Error-prone DNA polymerase from Xanthomonas oryzae pv. oryzae (strain PXO99A).